A 159-amino-acid chain; its full sequence is Anaerobic nitrite reductase HB2 (159 aa).

One can recognise a Globin domain in the interval 2-152 (GFTEKQEGLV…LAEAIKAEMK (151 aa)). A Homodimerization motif is present at residues 35–39 (EIAPG). Residues serine 45, lysine 59, histidine 63, and histidine 98 each contribute to the heme b site. A Homodimerization motif is present at residues 105–117 (DPHFEVVKEALLR).

The protein belongs to the plant globin family. As to quaternary structure, homodimer. Heme b is required as a cofactor.

It is found in the cytoplasm. Its subcellular location is the nucleus. It catalyses the reaction Fe(III)-heme b-[protein] + nitric oxide + H2O = Fe(II)-heme b-[protein] + nitrite + 2 H(+). Functionally, phytoglobin that reduces nitrite to nitric oxide (NO) under anoxic conditions (e.g. during flooding or in waterlogged soil). May not function as an oxygen storage or transport protein. Has an unusually high affinity for O(2) through an hexacoordinate heme iron because of a very low dissociation constant. This is Anaerobic nitrite reductase HB2 from Gossypium hirsutum (Upland cotton).